A 78-amino-acid polypeptide reads, in one-letter code: MNEYREYDEGLKRLSEIVEKLEDRELSLEENIKLYEEGMKLHKRLSSILKEQEGKMTLIKDNKEEDFQINMLLSDDNE.

It belongs to the XseB family. Heterooligomer composed of large and small subunits.

The protein resides in the cytoplasm. It carries out the reaction Exonucleolytic cleavage in either 5'- to 3'- or 3'- to 5'-direction to yield nucleoside 5'-phosphates.. In terms of biological role, bidirectionally degrades single-stranded DNA into large acid-insoluble oligonucleotides, which are then degraded further into small acid-soluble oligonucleotides. This Finegoldia magna (strain ATCC 29328 / DSM 20472 / WAL 2508) (Peptostreptococcus magnus) protein is Exodeoxyribonuclease 7 small subunit.